The chain runs to 576 residues: 60 kDa heat shock protein homolog 2, mitochondrial (576 aa).

A mitochondrion-targeting transit peptide spans 1–61 (MMRMFRYTNT…AVTMGPKGRN (61 aa)).

The protein belongs to the chaperonin (HSP60) family. As to expression, first detectable expression is seen in the posterior part of the dorsal tracheal trunk at stage 14-15, which marks the beginning of terminal tracheation. In the larval gut, expression in proventriculus is stronger than in midgut and hindgut. Malpighian tubules shows low expression and late third instar larval imaginal disks and brain showed moderate expression. In larval ovary and testis, expression is strong in the posterior region.

The protein localises to the mitochondrion matrix. Prevents misfolding and promotes the refolding and proper assembly of unfolded polypeptides generated under stress conditions. Essential for proper development of trachea, spermatogonia and spermatocytes. This Drosophila melanogaster (Fruit fly) protein is 60 kDa heat shock protein homolog 2, mitochondrial (Hsp60C).